A 632-amino-acid polypeptide reads, in one-letter code: Probable potassium transport system protein Kup 1 (632 aa).

12 consecutive transmembrane segments (helical) span residues 17-37, 60-80, 106-126, 146-166, 175-195, 210-230, 254-274, 292-312, 344-364, 370-390, 401-421, and 426-446; these read LFYL…TSPL, LISL…VLFL, TAIL…DAMI, LADY…VVQS, FFGP…ISHI, AVAF…AVFL, WFLL…ALVL, ALLP…QAVI, IFVP…VLGF, LATA…IMAF, LPVA…FLGA, and IHDG…VMWT.

It belongs to the HAK/KUP transporter (TC 2.A.72) family.

The protein resides in the cell inner membrane. The enzyme catalyses K(+)(in) + H(+)(in) = K(+)(out) + H(+)(out). Its function is as follows. Transport of potassium into the cell. Likely operates as a K(+):H(+) symporter. This chain is Probable potassium transport system protein Kup 1, found in Rhizobium johnstonii (strain DSM 114642 / LMG 32736 / 3841) (Rhizobium leguminosarum bv. viciae).